Reading from the N-terminus, the 259-residue chain is Adenosylcobinamide-GDP ribazoletransferase (259 aa).

Transmembrane regions (helical) follow at residues 9-29 (NLFFIAMGFFTRIPMPKWIEV), 43-63 (LVGLLVGAISALVYTLMLYWV), 64-84 (SPSIAIVLAMITSVLVTGGFH), 118-138 (ALALVLALLLKWQLLTELALF), 143-163 (VSLALIVGHCLSRVVAASFIF), and 190-210 (ILLATGILALLLVGVMQALVL).

Belongs to the CobS family. It depends on Mg(2+) as a cofactor.

The protein localises to the cell inner membrane. It catalyses the reaction alpha-ribazole + adenosylcob(III)inamide-GDP = adenosylcob(III)alamin + GMP + H(+). It carries out the reaction alpha-ribazole 5'-phosphate + adenosylcob(III)inamide-GDP = adenosylcob(III)alamin 5'-phosphate + GMP + H(+). It participates in cofactor biosynthesis; adenosylcobalamin biosynthesis; adenosylcobalamin from cob(II)yrinate a,c-diamide: step 7/7. In terms of biological role, joins adenosylcobinamide-GDP and alpha-ribazole to generate adenosylcobalamin (Ado-cobalamin). Also synthesizes adenosylcobalamin 5'-phosphate from adenosylcobinamide-GDP and alpha-ribazole 5'-phosphate. The protein is Adenosylcobinamide-GDP ribazoletransferase of Shewanella pealeana (strain ATCC 700345 / ANG-SQ1).